Consider the following 564-residue polypeptide: R-linalool synthase (564 aa).

Mg(2+)-binding residues include Asp-320, Asp-324, Asp-464, Thr-468, and Glu-472. Residues 320 to 324 carry the DDXXD motif motif; the sequence is DDVYD.

This sequence belongs to the terpene synthase family. Mg(2+) serves as cofactor. Requires Mn(2+) as cofactor.

It carries out the reaction (2E)-geranyl diphosphate + H2O = (R)-linalool + diphosphate. Specifically catalyzes production of (R)-(-)-linalool, the main component of lavender essential oil. This chain is R-linalool synthase, found in Lavandula angustifolia (Lavender).